We begin with the raw amino-acid sequence, 2025 residues long: E3 ubiquitin-protein ligase TRIP12 (2025 aa).

A compositionally biased stretch (polar residues) spans 1–10 (MSNRPNNNPG). The tract at residues 1–404 (MSNRPNNNPG…SGESESDDSE (404 aa)) is disordered. N-acetylserine is present on S2. S12 is subject to Phosphoserine. Residues 18–27 (RNTAGAQPQD) show a composition bias toward polar residues. Positions 48 to 70 (DPDRANTSERQKTGQVPKKDNSR) are enriched in basic and acidic residues. S77, S85, and S100 each carry phosphoserine. A compositionally biased stretch (polar residues) spans 78-88 (PDYNRTNSPSS). A compositionally biased stretch (polar residues) spans 119–132 (EQQLKSAQLPSTSK). 2 stretches are compositionally biased toward low complexity: residues 154 to 166 (SSCV…SEST) and 177 to 215 (KLAS…ASST). At K181 the chain carries N6-acetyllysine. The segment covering 280 to 290 (PGSSKSETSKP) has biased composition (polar residues). S310 and S312 each carry phosphoserine. Over residues 326-338 (QKTTGSCASTSRR) the composition is skewed to polar residues. Basic and acidic residues predominate over residues 346-358 (GAAEARRQEKMAD). A compositionally biased stretch (polar residues) spans 360-371 (ESNQETVNSSAA). A compositionally biased stretch (low complexity) spans 379–397 (GAAASSSVAGAVGMTTSGE). Residues 755–869 (MLKKGNAQNT…DPELAKSFIK (115 aa)) form the WWE domain. A disordered region spans residues 970–1077 (ESLLTSPPKA…QSPKSSFLAS (108 aa)). S975 bears the Phosphoserine mark. A compositionally biased stretch (low complexity) spans 983 to 1006 (GSGSLGSTTPASSGTATAATNASA). 2 positions are modified to phosphoserine: S1024 and S1030. Residues 1034–1047 (KRKRLPKRGPRRPK) are compositionally biased toward basic residues. Position 1049 is a phosphoserine (S1049). A compositionally biased stretch (basic and acidic residues) spans 1050–1059 (PPRDDDKVDN). Over residues 1062-1073 (KSPTTTQSPKSS) the composition is skewed to low complexity. Phosphoserine is present on residues S1063, S1350, S1355, S1362, and S1409. At T1410 the chain carries Phosphothreonine. Disordered regions lie at residues 1441 to 1466 (TKDC…NAKK) and 1601 to 1620 (TNPE…PRLD). An N6-acetyllysine modification is found at K1458. Phosphoserine is present on S1460. The tract at residues 1529 to 1603 (EIIPTSEFIN…AMQRLLDTNP (75 aa)) is K-box. The HECT domain occupies 1918-2025 (PDHGYTHDSR…REGQQSFHLS (108 aa)). Residue C1992 is the Glycyl thioester intermediate of the active site.

This sequence belongs to the UPL family. K-HECT subfamily. As to quaternary structure, interacts with MYC; leading to disrupt interaction with isoform p19ARF/ARF of CDKN2A. Interacts with TRADD; leading to disrupt interaction with isoform p19ARF/ARF of CDKN2A. Interacts with SMARCC1; leading to disrupt interaction with SMARCE1.

It localises to the nucleus. Its subcellular location is the nucleoplasm. It catalyses the reaction S-ubiquitinyl-[E2 ubiquitin-conjugating enzyme]-L-cysteine + [acceptor protein]-L-lysine = [E2 ubiquitin-conjugating enzyme]-L-cysteine + N(6)-ubiquitinyl-[acceptor protein]-L-lysine.. The protein operates within protein modification; protein ubiquitination. In terms of biological role, E3 ubiquitin-protein ligase involved in ubiquitin fusion degradation (UFD) pathway and regulation of DNA repair. Part of the ubiquitin fusion degradation (UFD) pathway, a process that mediates ubiquitination of protein at their N-terminus, regardless of the presence of lysine residues in target proteins. Acts as a key regulator of DNA damage response by acting as a suppressor of RNF168, an E3 ubiquitin-protein ligase that promotes accumulation of 'Lys-63'-linked histone H2A and H2AX at DNA damage sites, thereby acting as a guard against excessive spreading of ubiquitinated chromatin at damaged chromosomes. In normal cells, mediates ubiquitination and degradation of isoform p19ARF/ARF of CDKN2A, a lysine-less tumor suppressor required for p53/TP53 activation under oncogenic stress. In cancer cells, however, isoform p19ARF/ARF and TRIP12 are located in different cell compartments, preventing isoform p19ARF/ARF ubiquitination and degradation. Does not mediate ubiquitination of isoform p16-INK4a of CDKN2A. Also catalyzes ubiquitination of NAE1 and SMARCE1, leading to their degradation. Ubiquitination and degradation of target proteins is regulated by interaction with proteins such as MYC, TRADD or SMARCC1, which disrupt the interaction between TRIP12 and target proteins. Mediates ubiquitination of ASXL1: following binding to N(6)-methyladenosine methylated DNA, ASXL1 is ubiquitinated by TRIP12, leading to its degradation and subsequent inactivation of the PR-DUB complex. The polypeptide is E3 ubiquitin-protein ligase TRIP12 (Trip12) (Mus musculus (Mouse)).